The chain runs to 71 residues: Large ribosomal subunit protein bL31 (71 aa).

Positions 16, 18, 37, and 40 each coordinate Zn(2+).

It belongs to the bacterial ribosomal protein bL31 family. Type A subfamily. In terms of assembly, part of the 50S ribosomal subunit. Requires Zn(2+) as cofactor.

Functionally, binds the 23S rRNA. The chain is Large ribosomal subunit protein bL31 from Pseudomonas aeruginosa (strain LESB58).